The primary structure comprises 559 residues: Glucose-6-phosphate isomerase (559 aa).

The Proton donor role is filled by glutamate 352. Catalysis depends on residues histidine 383 and lysine 511.

This sequence belongs to the GPI family.

The protein localises to the cytoplasm. The catalysed reaction is alpha-D-glucose 6-phosphate = beta-D-fructose 6-phosphate. Its pathway is carbohydrate biosynthesis; gluconeogenesis. It participates in carbohydrate degradation; glycolysis; D-glyceraldehyde 3-phosphate and glycerone phosphate from D-glucose: step 2/4. Its function is as follows. Catalyzes the reversible isomerization of glucose-6-phosphate to fructose-6-phosphate. The protein is Glucose-6-phosphate isomerase of Chlorobium phaeobacteroides (strain DSM 266 / SMG 266 / 2430).